The following is a 522-amino-acid chain: MLGKHTKLFFGVSLVALIVSVILAAWGFPKIVSKQIQKNIQIDNSSVMFEKWRKIPMPLTFNVYVFNVTNVEDVNNGAKPRLQQIGPYAYKEYRERTVLGYGDNDTVSYTLKKTFIFDQEASGLLSEDDEVTVIHFSYMAAILTVNDMMPSITGVVNGALEQFFTNLTDPFLRVKVKDLFFDGVYVNCAGNHSALGLVCGKLKADAPQTMRPAGDGNGFYFSMFSHMNRTESGPYEMIRGRENIKELGHIISYKGKSFMKNWGNDMYCGQLNGSDASIFPPIDENNVPEKLYTFEPEVCRSLYASLVGKSSIFNMSAYYYEISSDALASKSANPGNKCYCKKNWSANHDGCLIMGILNLMPCQDAPAIASLPHFYLASEELLEYFDGGISPDKEKHNTYIYLEPVTGVVLKGLRRLQFNIELRNIPMVPQLAKVPTGLFPLLWIEEGAELPDSIIQELRQSHTLLGYVEAVRWALLAIAIVATAISAIAVARSGLIPVWPRNANSVSFILSPHPNSDVNKVH.

Residues 1–7 lie on the Cytoplasmic side of the membrane; that stretch reads MLGKHTK. The helical transmembrane segment at 8–28 threads the bilayer; sequence LFFGVSLVALIVSVILAAWGF. At 29-469 the chain is on the extracellular side; it reads PKIVSKQIQK…QSHTLLGYVE (441 aa). N-linked (GlcNAc...) asparagine glycosylation is found at Asn-44, Asn-67, Asn-104, Asn-166, Asn-191, Asn-228, Asn-272, Asn-314, and Asn-343. 3 disulfides stabilise this stretch: Cys-268-Cys-338, Cys-299-Cys-362, and Cys-340-Cys-351. A helical membrane pass occupies residues 470-490; that stretch reads AVRWALLAIAIVATAISAIAV. The Cytoplasmic segment spans residues 491–522; that stretch reads ARSGLIPVWPRNANSVSFILSPHPNSDVNKVH.

The protein belongs to the CD36 family. In terms of tissue distribution, detected in both male and female antennal tissues. Expression is two to three fold higher in male compared to female antenna. Detected at low levels in all body tissues except the female abdomen.

It localises to the cell membrane. In terms of biological role, plays an olfactory role that is not restricted to pheromone sensitivity. The protein is Sensory neuron membrane protein 2 of Ostrinia furnacalis (Asian corn borer).